The following is a 326-amino-acid chain: Transcription initiation factor IIB (326 aa).

The TFIIB-type zinc finger occupies 26–57 (DVEVCPECGSPRLIRDYRRGEFICQDCGLVIE). Positions 30, 33, 49, and 52 each coordinate Zn(2+). 2 consecutive repeat copies span residues 143 to 226 (SELD…TREL) and 237 to 318 (DYIP…ELAE).

Belongs to the TFIIB family.

Its function is as follows. Stabilizes TBP binding to an archaeal box-A promoter. Also responsible for recruiting RNA polymerase II to the pre-initiation complex (DNA-TBP-TFIIB). This is Transcription initiation factor IIB from Archaeoglobus fulgidus (strain ATCC 49558 / DSM 4304 / JCM 9628 / NBRC 100126 / VC-16).